Here is a 931-residue protein sequence, read N- to C-terminus: Netrin receptor UNC5C (931 aa).

An N-terminal signal peptide occupies residues 1-39; sequence MGKGLEGTAARCGLGMGYLLHSVVLPALAVLGASRPGSA. Over 40 to 380 the chain is Extracellular; sequence AQDDDFFHEL…APDSDDVALY (341 aa). In terms of domain architecture, Ig-like spans 62-159; that stretch reads PHFLIEPEEA…AGTTKSRKAY (98 aa). Disulfide bonds link Cys83-Cys144, Cys95-Cys142, Cys188-Cys239, Cys272-Cys309, Cys276-Cys313, Cys287-Cys299, Cys328-Cys362, Cys332-Cys367, and Cys340-Cys352. The Ig-like C2-type domain maps to 161–256; sequence RIAYLRKTFE…KRKSTTATVI (96 aa). An N-linked (GlcNAc...) asparagine glycan is attached at Asn236. TSP type-1 domains are found at residues 260–314 and 316–368; these read NGGW…TLCP and DGKW…GLCM. An N-linked (GlcNAc...) asparagine glycan is attached at Asn361. The helical transmembrane segment at 381–401 threads the bilayer; it reads VGIVIAVIVCLAISVVVALFV. Topologically, residues 402 to 931 are cytoplasmic; it reads YRKNHRDFES…VVSLAAEGNY (530 aa). In terms of domain architecture, ZU5 spans 530 to 664; that stretch reads CTAFGTFNSL…EACHILTETL (135 aa). Residues 850–929 enclose the Death domain; the sequence is QKLCSSLDAP…ETVVSLAAEG (80 aa).

Belongs to the unc-5 family. As to expression, restricted to proprioceptive neurons.

The protein localises to the cell membrane. It is found in the cell surface. The protein resides in the synapse. It localises to the synaptosome. Its subcellular location is the cell projection. The protein localises to the axon. It is found in the dendrite. The protein resides in the growth cone. It localises to the lamellipodium. Its subcellular location is the filopodium. In terms of biological role, receptor for netrin required for axon guidance. Mediates axon repulsion of neuronal growth cones in the developing nervous system upon ligand binding. Involved in dorsal root ganglion axon projection towards the spinal cord. The polypeptide is Netrin receptor UNC5C (UNC5C) (Gallus gallus (Chicken)).